The following is a 67-amino-acid chain: uncharacterized protein (67 aa).

A run of 2 helical transmembrane segments spans residues 6–26 (GQLWIVFMWVSGVVCGICVLM) and 38–58 (NNIIIIIIIIMMIKIMKIIII).

It is found in the membrane. This is an uncharacterized protein from Dictyostelium discoideum (Social amoeba).